The primary structure comprises 352 residues: MGTVPANPFKIIQLAFKETVPKAHAELQKWHQEALKIEDVEIREQAAWTVNDKTFHCEGGSIFALLAGENKDNHIQFLVAYQTICDYLDTLCDKNDAHDPNDFRSIHQALLDCLTPDKPYGDYYQYRDRFEDNGYLRKLVDACREATASFPGFADMQTHMQEVSQFYIDFQVYKHVEEEKREPLLKDFYERNKHFAPTMRWYEFACGTASTLALYCMAAYAAAPVQTAQGQQIKEAYFTWVQGVHILLDYFIDQEEDRQENEMNFVAYYRDSKEMFERFKYIDEKATEKLQMLPDKKFHLLLKTGLYALYLSDKKVMSHPRLKAEAKQLIKLGGFPASLFYYNRWIFKRKIS.

This sequence belongs to the large terpene synthase family.

The catalysed reaction is (2E,6E,10E,14E)-geranylfarnesyl diphosphate = beta-geranylfarnesene + diphosphate. It carries out the reaction all-trans-hexaprenyl diphosphate = beta-hexaprene + diphosphate. It catalyses the reaction all-trans-heptaprenyl diphosphate = beta-heptaprene + diphosphate. In terms of biological role, catalyzes the conversion of geranylfarnesyl diphosphate (GFPP) and hexaprenyl diphosphate (HexPP) into beta-geranylfarnesene and beta-hexaprene, respectively. Also produces beta-heptaprene from heptaprenyl diphosphate (HepPP) as a minor product. The polypeptide is Trifunctional sesterterpene/triterpene/sesquarterpene synthase (Shouchella clausii (Alkalihalobacillus clausii)).